Consider the following 131-residue polypeptide: Small ribosomal subunit protein uS8 (131 aa).

This sequence belongs to the universal ribosomal protein uS8 family. In terms of assembly, part of the 30S ribosomal subunit. Contacts proteins S5 and S12.

Functionally, one of the primary rRNA binding proteins, it binds directly to 16S rRNA central domain where it helps coordinate assembly of the platform of the 30S subunit. The chain is Small ribosomal subunit protein uS8 from Bacteroides fragilis (strain ATCC 25285 / DSM 2151 / CCUG 4856 / JCM 11019 / LMG 10263 / NCTC 9343 / Onslow / VPI 2553 / EN-2).